The primary structure comprises 617 residues: BTB/POZ domain-containing protein At3g08570 (617 aa).

Residues 36-106 enclose the BTB domain; sequence GDITIVVDGE…CYGINFEITI (71 aa). An NPH3 domain is found at 210–490; it reads EWWIEDLSAL…VRVLYSEQLR (281 aa). Tyr431 carries the phosphotyrosine modification. Disordered stretches follow at residues 505-525 and 585-617; these read LSSQ…RDTY and GGGP…ESMF. Residues 602-617 show a composition bias toward basic and acidic residues; the sequence is SRLERKTVRSRPESMF.

Belongs to the NPH3 family.

Its pathway is protein modification; protein ubiquitination. In terms of biological role, may act as a substrate-specific adapter of an E3 ubiquitin-protein ligase complex (CUL3-RBX1-BTB) which mediates the ubiquitination and subsequent proteasomal degradation of target proteins. In Arabidopsis thaliana (Mouse-ear cress), this protein is BTB/POZ domain-containing protein At3g08570.